The following is a 447-amino-acid chain: Trigger factor (447 aa).

The PPIase FKBP-type domain occupies 159-244; the sequence is GDMLLMQVES…VREIKEEKLP (86 aa).

The protein belongs to the FKBP-type PPIase family. Tig subfamily.

Its subcellular location is the cytoplasm. The catalysed reaction is [protein]-peptidylproline (omega=180) = [protein]-peptidylproline (omega=0). Its function is as follows. Involved in protein export. Acts as a chaperone by maintaining the newly synthesized protein in an open conformation. Functions as a peptidyl-prolyl cis-trans isomerase. This chain is Trigger factor, found in Dehalococcoides mccartyi (strain ATCC BAA-2100 / JCM 16839 / KCTC 5957 / BAV1).